The chain runs to 274 residues: 3-methyl-2-oxobutanoate hydroxymethyltransferase (274 aa).

Mg(2+)-binding residues include aspartate 46 and aspartate 85. 3-methyl-2-oxobutanoate contacts are provided by residues 46–47 (DS), aspartate 85, and lysine 114. Glutamate 116 is a binding site for Mg(2+). Glutamate 183 acts as the Proton acceptor in catalysis.

This sequence belongs to the PanB family. Homodecamer; pentamer of dimers. Mg(2+) serves as cofactor.

Its subcellular location is the cytoplasm. It catalyses the reaction 3-methyl-2-oxobutanoate + (6R)-5,10-methylene-5,6,7,8-tetrahydrofolate + H2O = 2-dehydropantoate + (6S)-5,6,7,8-tetrahydrofolate. Its pathway is cofactor biosynthesis; coenzyme A biosynthesis. Catalyzes the reversible reaction in which hydroxymethyl group from 5,10-methylenetetrahydrofolate is transferred onto alpha-ketoisovalerate to form ketopantoate. This is 3-methyl-2-oxobutanoate hydroxymethyltransferase from Aeropyrum pernix (strain ATCC 700893 / DSM 11879 / JCM 9820 / NBRC 100138 / K1).